The sequence spans 124 residues: Large ribosomal subunit protein bL12 (124 aa).

Belongs to the bacterial ribosomal protein bL12 family. In terms of assembly, homodimer. Part of the ribosomal stalk of the 50S ribosomal subunit. Forms a multimeric L10(L12)X complex, where L10 forms an elongated spine to which 2 to 4 L12 dimers bind in a sequential fashion. Binds GTP-bound translation factors.

Forms part of the ribosomal stalk which helps the ribosome interact with GTP-bound translation factors. Is thus essential for accurate translation. The polypeptide is Large ribosomal subunit protein bL12 (Pelodictyon phaeoclathratiforme (strain DSM 5477 / BU-1)).